The primary structure comprises 41 residues: Large ribosomal subunit protein bL36 (41 aa).

Belongs to the bacterial ribosomal protein bL36 family.

The chain is Large ribosomal subunit protein bL36 from Methylobacterium nodulans (strain LMG 21967 / CNCM I-2342 / ORS 2060).